Consider the following 918-residue polypeptide: Protein translocase subunit SecA (918 aa).

ATP-binding positions include Q87, G105–T109, and D516. Residues C902, C904, C913, and H914 each contribute to the Zn(2+) site.

It belongs to the SecA family. Monomer and homodimer. Part of the essential Sec protein translocation apparatus which comprises SecA, SecYEG and auxiliary proteins SecDF-YajC and YidC. The cofactor is Zn(2+).

The protein resides in the cell inner membrane. Its subcellular location is the cytoplasm. It catalyses the reaction ATP + H2O + cellular proteinSide 1 = ADP + phosphate + cellular proteinSide 2.. Part of the Sec protein translocase complex. Interacts with the SecYEG preprotein conducting channel. Has a central role in coupling the hydrolysis of ATP to the transfer of proteins into and across the cell membrane, serving both as a receptor for the preprotein-SecB complex and as an ATP-driven molecular motor driving the stepwise translocation of polypeptide chains across the membrane. This is Protein translocase subunit SecA from Methylibium petroleiphilum (strain ATCC BAA-1232 / LMG 22953 / PM1).